The following is a 317-amino-acid chain: Testis-expressed protein 19.2 (317 aa).

The span at 64 to 75 (MELSEASSEPEE) shows a compositional bias: acidic residues. The segment at 64–113 (MELSEASSEPEEWPGLSGGEGQGHLPHGISVSAGSGAQGPQPVPTELGPQ) is disordered. The important for interaction with piRNA stretch occupies residues 101 to 145 (QGPQPVPTELGPQEAVPLDLGPEDAEWTQALPWRFDGLSPCSHWL).

As to quaternary structure, interacts with UBR2. Interacts with piRNA-associated proteins DDX4, EDC4, MAEL, PIWIL1, PIWIL2, RANBP9 and TDRD6. In terms of tissue distribution, specifically expressed in somatic cells of male gonad lineage.

The protein resides in the cytoplasm. Its function is as follows. May be required during spermatogenesis, probably by participating in the repression of retrotransposable elements and prevent their mobilization. With its paralog, Tex19.1, collaborates with the Piwi-interacting RNA (piRNA) pathway, which mediates the repression of transposable elements during meiosis by forming complexes composed of piRNAs and Piwi proteins. Interacts with Piwi proteins and directly binds piRNAs, a class of 24 to 30 nucleotide RNAs that are generated by a Dicer-independent mechanism and are primarily derived from transposons and other repeated sequence elements. The polypeptide is Testis-expressed protein 19.2 (Tex19.2) (Mus musculus (Mouse)).